The primary structure comprises 537 residues: 2-isopropylmalate synthase (537 aa).

One can recognise a Pyruvate carboxyltransferase domain in the interval 8-273; sequence IIIFDTTLRD…FLGRPVDSME (266 aa). Mn(2+) is bound by residues Asp-17, His-208, His-210, and Asn-244. Residues 408-537 are regulatory domain; the sequence is RLELVQVSCG…PSEPVLTSKN (130 aa).

It belongs to the alpha-IPM synthase/homocitrate synthase family. LeuA type 1 subfamily. As to quaternary structure, homodimer. The cofactor is Mn(2+).

The protein localises to the cytoplasm. The catalysed reaction is 3-methyl-2-oxobutanoate + acetyl-CoA + H2O = (2S)-2-isopropylmalate + CoA + H(+). Its pathway is amino-acid biosynthesis; L-leucine biosynthesis; L-leucine from 3-methyl-2-oxobutanoate: step 1/4. In terms of biological role, catalyzes the condensation of the acetyl group of acetyl-CoA with 3-methyl-2-oxobutanoate (2-ketoisovalerate) to form 3-carboxy-3-hydroxy-4-methylpentanoate (2-isopropylmalate). The chain is 2-isopropylmalate synthase from Crocosphaera subtropica (strain ATCC 51142 / BH68) (Cyanothece sp. (strain ATCC 51142)).